The following is a 120-amino-acid chain: Large ribosomal subunit protein eL18 (120 aa).

It belongs to the eukaryotic ribosomal protein eL18 family.

The sequence is that of Large ribosomal subunit protein eL18 from Methanococcus maripaludis (strain DSM 14266 / JCM 13030 / NBRC 101832 / S2 / LL).